The following is a 349-amino-acid chain: Inhibitor of nuclear factor kappa-B kinase-interacting protein (349 aa).

Residues 1–11 (MSEVKSRKKSG) show a composition bias toward basic residues. A disordered region spans residues 1-39 (MSEVKSRKKSGTKGAPAEPGKRNEGGKSPEARGGGGRGW). Basic and acidic residues predominate over residues 19-30 (PGKRNEGGKSPE). Residues 45–61 (GVSLLSLGTCLGLAWFV) form a helical membrane-spanning segment. N145 carries N-linked (GlcNAc...) asparagine glycosylation. Coiled-coil stretches lie at residues 183 to 216 (GLVT…IGDL) and 304 to 347 (IGRL…HISD). N327 carries an N-linked (GlcNAc...) asparagine glycan.

Post-translationally, N-glycosylated.

The protein localises to the endoplasmic reticulum membrane. In terms of biological role, target of p53/TP53 with pro-apoptotic function. The polypeptide is Inhibitor of nuclear factor kappa-B kinase-interacting protein (IKBIP) (Bos taurus (Bovine)).